Consider the following 705-residue polypeptide: Bifunctional arginine dihydrolase/ornithine cyclodeaminase ArgZ (705 aa).

The arginine dihydrolase stretch occupies residues 10–269; the sequence is CPPDHYDVDY…GAAKCLTLRV (260 aa). 8 residues coordinate L-arginine: N22, N71, R90, R139, H168, D170, A258, and C264. N22, N71, R90, R139, and H168 together coordinate L-ornithine. H168 (proton donor/acceptor) is an active-site residue. The L-ornithine site is built by A258 and C264. C264 acts as the Nucleophile in catalysis. Positions 285–695 are ornithine cyclodeaminase; the sequence is SRVIRMEGHL…SLLVRQLQQL (411 aa). NAD(+) contacts are provided by N525, A526, D604, S636, M637, L638, H639, D657, D680, and V681.

This sequence in the N-terminal section; belongs to the DDAH family. It in the C-terminal section; belongs to the AgrE/ArgZ ornithine cyclodeaminase family. In terms of assembly, homotetramer. NAD(+) serves as cofactor.

It carries out the reaction L-arginine + 2 H2O + 2 H(+) = L-ornithine + 2 NH4(+) + CO2. The enzyme catalyses L-ornithine = L-proline + NH4(+). With respect to regulation, arginine dihydrolase activity does not require a metal cofactor. In terms of biological role, bifunctional enzyme involved in a cyanobacterial arginine utilization pathway that enables cellular adaptation to nitrogen fluctuations. Catalyzes the hydrolysis of arginine to ornithine, with the release of ammonia and carbon dioxide. Then, probably catalyzes the conversion of ornithine to proline, with the release of ammonia. Is highly specific for arginine and cannot hydrolyze citrulline, dimethylarginine and other amino acids. This Synechocystis sp. (strain ATCC 27184 / PCC 6803 / Kazusa) protein is Bifunctional arginine dihydrolase/ornithine cyclodeaminase ArgZ.